Here is a 346-residue protein sequence, read N- to C-terminus: Nicotinate-nucleotide--dimethylbenzimidazole phosphoribosyltransferase (346 aa).

Glu-312 acts as the Proton acceptor in catalysis.

The protein belongs to the CobT family.

It carries out the reaction 5,6-dimethylbenzimidazole + nicotinate beta-D-ribonucleotide = alpha-ribazole 5'-phosphate + nicotinate + H(+). Its pathway is nucleoside biosynthesis; alpha-ribazole biosynthesis; alpha-ribazole from 5,6-dimethylbenzimidazole: step 1/2. Catalyzes the synthesis of alpha-ribazole-5'-phosphate from nicotinate mononucleotide (NAMN) and 5,6-dimethylbenzimidazole (DMB). This is Nicotinate-nucleotide--dimethylbenzimidazole phosphoribosyltransferase from Cupriavidus taiwanensis (strain DSM 17343 / BCRC 17206 / CCUG 44338 / CIP 107171 / LMG 19424 / R1) (Ralstonia taiwanensis (strain LMG 19424)).